The following is a 229-amino-acid chain: DNA mismatch repair protein MutH (229 aa).

This sequence belongs to the MutH family.

It is found in the cytoplasm. Sequence-specific endonuclease that cleaves unmethylated GATC sequences. It is involved in DNA mismatch repair. The sequence is that of DNA mismatch repair protein MutH from Escherichia coli O6:K15:H31 (strain 536 / UPEC).